The sequence spans 176 residues: Calcium and integrin-binding family member 2 (176 aa).

EF-hand domains are found at residues 55–90 (RENP…LCES), 92–127 (PRDL…LTKS), and 133–168 (EVVL…APDF). Asp105, Asn107, Asp109, Asp116, Asp146, Asp148, Asp150, Lys152, and Asp157 together coordinate Ca(2+).

As to quaternary structure, monomer. Homodimer. Interacts with WHRN and MYO7A. Interacts with ITGA2B (via C-terminus cytoplasmic tail region); the interactions are stabilized/increased in a calcium and magnesium-dependent manner. Interacts with ITGA7 (via C-terminus cytoplasmic tail region); the interactions are stabilized/increased in a calcium and magnesium-dependent manner. Interacts with TMC1. Interacts with TMC2. As to expression, expressed in liver, heart, kidney, brain, spleen, stomach, ovary, testis and muscle.

The protein localises to the cytoplasm. It localises to the cell projection. The protein resides in the stereocilium. Its subcellular location is the photoreceptor inner segment. It is found in the cilium. The protein localises to the photoreceptor outer segment. It localises to the cell membrane. The protein resides in the sarcolemma. Its function is as follows. Calcium- and integrin-binding protein that plays a role in intracellular calcium homeostasis. Acts as an auxiliary subunit of the sensory mechanoelectrical transduction (MET) channel in hair cells. Essential for mechanoelectrical transduction (MET) currents in auditory hair cells and thereby required for hearing. Regulates the function of hair cell mechanotransduction by controlling the distribution of transmembrane channel-like proteins TMC1 and TMC2, and by regulating the function of the MET channels in hair cells. Required for the maintenance of auditory hair cell stereocilia bundle morphology and function and for hair-cell survival in the cochlea. Critical for proper photoreceptor cell maintenance and function. Plays a role in intracellular calcium homeostasis by decreasing ATP-induced calcium release. The sequence is that of Calcium and integrin-binding family member 2 (CIB2) from Ovis aries (Sheep).